Here is a 313-residue protein sequence, read N- to C-terminus: 2-phosphoglycerate kinase (313 aa).

One can recognise an ATP-cone domain in the interval 8 to 95 (NKILVKDKDY…LWRRVLKKHS (88 aa)).

Belongs to the 2-phosphoglycerate kinase family. It depends on a divalent metal cation as a cofactor.

The catalysed reaction is (2R)-2-phosphoglycerate + ATP = (2R)-2,3-bisphosphoglycerate + ADP + H(+). The protein operates within thermoadapter biosynthesis; cyclic 2,3-diphosphoglycerate biosynthesis; cyclic 2,3-diphosphoglycerate from 2-phospho-D-glycerate: step 1/2. Catalyzes the phosphorylation of 2-phosphoglycerate to 2,3-diphosphoglycerate. Involved in the biosynthesis of cyclic 2,3-bisphosphoglycerate, a thermoprotectant. The polypeptide is 2-phosphoglycerate kinase (Methanococcus vannielii (strain ATCC 35089 / DSM 1224 / JCM 13029 / OCM 148 / SB)).